A 323-amino-acid chain; its full sequence is HTH-type transcriptional activator CmpR (323 aa).

The region spanning Leu4 to Thr61 is the HTH lysR-type domain. A DNA-binding region (H-T-H motif) is located at residues Phe21–Lys40. Residues Ile304–Val323 form a disordered region.

The protein belongs to the LysR transcriptional regulatory family.

The protein localises to the cytoplasm. In terms of biological role, activates transcription of the cmpABCD operon under carbon dioxide-limited conditions. The sequence is that of HTH-type transcriptional activator CmpR (cmpR) from Synechococcus elongatus (strain ATCC 33912 / PCC 7942 / FACHB-805) (Anacystis nidulans R2).